The following is a 109-amino-acid chain: Class I hydrophobin dewE (109 aa).

The signal sequence occupies residues 1–20 (MKVATALSVLAVAGSALASA). 4 cysteine pairs are disulfide-bonded: Cys-34-Cys-87, Cys-40-Cys-81, Cys-41-Cys-74, and Cys-88-Cys-102.

It belongs to the fungal hydrophobin family. In terms of assembly, self-assembles to form functional amyloid fibrils called rodlets. Self-assembly into fibrillar rodlets occurs spontaneously at hydrophobic:hydrophilic interfaces and the rodlets further associate laterally to form amphipathic monolayers.

The protein localises to the secreted. The protein resides in the spore wall. Aerial growth, conidiation, and dispersal of filamentous fungi in the environment rely upon a capability of their secreting small amphipathic proteins called hydrophobins (HPBs) with low sequence identity. Class I can self-assemble into an outermost layer of rodlet bundles on aerial cell surfaces, conferring cellular hydrophobicity that supports fungal growth, development and dispersal; whereas Class II form highly ordered films at water-air interfaces through intermolecular interactions but contribute nothing to the rodlet structure. DewE is a class I hydrophobin that contributes to the hydrophobicity of the spore surface. In Emericella nidulans (strain FGSC A4 / ATCC 38163 / CBS 112.46 / NRRL 194 / M139) (Aspergillus nidulans), this protein is Class I hydrophobin dewE.